The following is a 338-amino-acid chain: GTP 3',8-cyclase (338 aa).

The Radical SAM core domain maps to 8–227; the sequence is KLQRPLKDLR…DMIHQVMPLE (220 aa). Arginine 17 provides a ligand contact to GTP. [4Fe-4S] cluster contacts are provided by cysteine 24 and cysteine 28. Tyrosine 30 serves as a coordination point for S-adenosyl-L-methionine. Cysteine 31 is a binding site for [4Fe-4S] cluster. Residue arginine 71 participates in GTP binding. An S-adenosyl-L-methionine-binding site is contributed by glycine 75. A GTP-binding site is contributed by threonine 102. Serine 126 serves as a coordination point for S-adenosyl-L-methionine. Residue lysine 163 coordinates GTP. An S-adenosyl-L-methionine-binding site is contributed by methionine 197. Cysteine 261 and cysteine 264 together coordinate [4Fe-4S] cluster. Residue 266–268 participates in GTP binding; it reads RAR. Cysteine 278 is a [4Fe-4S] cluster binding site.

This sequence belongs to the radical SAM superfamily. MoaA family. As to quaternary structure, monomer and homodimer. [4Fe-4S] cluster serves as cofactor.

It carries out the reaction GTP + AH2 + S-adenosyl-L-methionine = (8S)-3',8-cyclo-7,8-dihydroguanosine 5'-triphosphate + 5'-deoxyadenosine + L-methionine + A + H(+). It participates in cofactor biosynthesis; molybdopterin biosynthesis. Functionally, catalyzes the cyclization of GTP to (8S)-3',8-cyclo-7,8-dihydroguanosine 5'-triphosphate. In Bacillus anthracis (strain CDC 684 / NRRL 3495), this protein is GTP 3',8-cyclase.